A 174-amino-acid polypeptide reads, in one-letter code: MSHSKIKAGGHGSSGIGNDFTPAKTPAPATPAPQSQQVNDLLGRGVGNALNKSNLGSDSQTWTPGSTMVSLKSRSSSSHKPDTGGDTKPDSTSGGKRKRDDETDPNAETEGGKKKKKRDDENDSSQAGGAGSSAGSSGSPEDALMNIALQRAIQRQTQTRQKMQEAMKIKDDDD.

The interval 1-174 (MSHSKIKAGG…EAMKIKDDDD (174 aa)) is disordered. Residues 50 to 65 (LNKSNLGSDSQTWTPG) are compositionally biased toward polar residues. Over residues 66-78 (STMVSLKSRSSSS) the composition is skewed to low complexity. Residues 79–89 (HKPDTGGDTKP) show a composition bias toward basic and acidic residues. The segment covering 147 to 161 (IALQRAIQRQTQTRQ) has biased composition (low complexity). A compositionally biased stretch (basic and acidic residues) spans 162–174 (KMQEAMKIKDDDD).

It localises to the secreted. Its function is as follows. Probably involved in host-pathogen interactions. The sequence is that of Protein PopB (popB) from Ralstonia nicotianae (strain ATCC BAA-1114 / GMI1000) (Ralstonia solanacearum).